Here is a 954-residue protein sequence, read N- to C-terminus: Glycine dehydrogenase (decarboxylating) (954 aa).

K704 bears the N6-(pyridoxal phosphate)lysine mark.

This sequence belongs to the GcvP family. The glycine cleavage system is composed of four proteins: P, T, L and H. The cofactor is pyridoxal 5'-phosphate.

The catalysed reaction is N(6)-[(R)-lipoyl]-L-lysyl-[glycine-cleavage complex H protein] + glycine + H(+) = N(6)-[(R)-S(8)-aminomethyldihydrolipoyl]-L-lysyl-[glycine-cleavage complex H protein] + CO2. Functionally, the glycine cleavage system catalyzes the degradation of glycine. The P protein binds the alpha-amino group of glycine through its pyridoxal phosphate cofactor; CO(2) is released and the remaining methylamine moiety is then transferred to the lipoamide cofactor of the H protein. The sequence is that of Glycine dehydrogenase (decarboxylating) from Rhizobium leguminosarum bv. trifolii (strain WSM2304).